Reading from the N-terminus, the 395-residue chain is Oxalate oxidoreductase subunit alpha (395 aa).

Dimer of heterotrimer of one alpha, one beta and one delta subunit.

The enzyme catalyses oxidized 2[4Fe-4S]-[ferredoxin] + oxalate = reduced 2[4Fe-4S]-[ferredoxin] + 2 CO2. Functionally, catalyzes the anaerobic oxidation of oxalate using a broad range of electron acceptors, including ferredoxin and the nickel-dependent carbon monoxide dehydrogenase. Does not require coenzyme A as cosubstrate. Enables anaerobic growth on oxalate which is used as energy source by the bacteria. The polypeptide is Oxalate oxidoreductase subunit alpha (Moorella thermoacetica (strain ATCC 39073 / JCM 9320)).